A 174-amino-acid chain; its full sequence is Ribosome maturation factor RimM (174 aa).

In terms of domain architecture, PRC barrel spans 98–171 (EGEFYFHEII…KIEIELMEGL (74 aa)).

Belongs to the RimM family. Binds ribosomal protein uS19.

Its subcellular location is the cytoplasm. Functionally, an accessory protein needed during the final step in the assembly of 30S ribosomal subunit, possibly for assembly of the head region. Essential for efficient processing of 16S rRNA. May be needed both before and after RbfA during the maturation of 16S rRNA. It has affinity for free ribosomal 30S subunits but not for 70S ribosomes. The chain is Ribosome maturation factor RimM from Bacillus subtilis (strain 168).